The sequence spans 411 residues: 2,3-bisphosphoglycerate-independent phosphoglycerate mutase (411 aa).

The protein belongs to the BPG-independent phosphoglycerate mutase family. A-PGAM subfamily.

The enzyme catalyses (2R)-2-phosphoglycerate = (2R)-3-phosphoglycerate. It functions in the pathway carbohydrate degradation; glycolysis; pyruvate from D-glyceraldehyde 3-phosphate: step 3/5. Its function is as follows. Catalyzes the interconversion of 2-phosphoglycerate and 3-phosphoglycerate. The chain is 2,3-bisphosphoglycerate-independent phosphoglycerate mutase from Pyrobaculum aerophilum (strain ATCC 51768 / DSM 7523 / JCM 9630 / CIP 104966 / NBRC 100827 / IM2).